The sequence spans 492 residues: N-succinylglutamate 5-semialdehyde dehydrogenase (492 aa).

Position 220–225 (220–225) interacts with NAD(+); it reads GSANTG. Active-site residues include glutamate 243 and cysteine 277.

The protein belongs to the aldehyde dehydrogenase family. AstD subfamily.

The enzyme catalyses N-succinyl-L-glutamate 5-semialdehyde + NAD(+) + H2O = N-succinyl-L-glutamate + NADH + 2 H(+). The protein operates within amino-acid degradation; L-arginine degradation via AST pathway; L-glutamate and succinate from L-arginine: step 4/5. Its function is as follows. Catalyzes the NAD-dependent reduction of succinylglutamate semialdehyde into succinylglutamate. The sequence is that of N-succinylglutamate 5-semialdehyde dehydrogenase from Escherichia coli O6:H1 (strain CFT073 / ATCC 700928 / UPEC).